The primary structure comprises 648 residues: Actin-related protein 5 (648 aa).

The tract at residues 34–59 (LTKPRKDRKKEAAASEGSASQTTVEQ) is disordered. 2 coiled-coil regions span residues 277-311 (TAEQKQEKRRELAHRLLDIKKNREQEKLREDEQQL) and 340-364 (TLEDLDSLIATINSRIKRAQERAQS). Disordered regions lie at residues 357–385 (RAQERAQSGPRPSKQQERLNKMPKPPEGM) and 403–455 (GRKQ…GMND). The segment covering 414-428 (EQAKRHTHAAQERMR) has biased composition (basic and acidic residues). Phosphoserine occurs at positions 471 and 473.

The protein belongs to the actin family. ARP5 subfamily. As to quaternary structure, component of the chromatin remodeling Ino80 complex.

The protein resides in the nucleus. Proposed core component of the chromatin remodeling Ino80 complex which is involved in transcriptional regulation, DNA replication and probably DNA repair. This is Actin-related protein 5 from Drosophila melanogaster (Fruit fly).